The following is a 428-amino-acid chain: Bifunctional protein GlmU (428 aa).

A pyrophosphorylase region spans residues Met-1–Arg-221. UDP-N-acetyl-alpha-D-glucosamine-binding positions include Leu-6–Gly-9, Lys-20, Gln-74, Gly-79–Thr-80, Tyr-103–Asp-105, Gly-140, and Asn-219. Residue Asp-105 coordinates Mg(2+). Asn-219 contacts Mg(2+). A linker region spans residues Ala-222 to Ser-242. The N-acetyltransferase stretch occupies residues Gly-243–Arg-428. Residues Arg-308 and Lys-326 each contribute to the UDP-N-acetyl-alpha-D-glucosamine site. The active-site Proton acceptor is the His-338. UDP-N-acetyl-alpha-D-glucosamine contacts are provided by Tyr-341 and Asn-352. Acetyl-CoA contacts are provided by residues Ala-355, Asn-361–Tyr-362, Ala-398, and Arg-415.

It in the N-terminal section; belongs to the N-acetylglucosamine-1-phosphate uridyltransferase family. In the C-terminal section; belongs to the transferase hexapeptide repeat family. Homotrimer. Requires Mg(2+) as cofactor.

The protein localises to the cytoplasm. The enzyme catalyses alpha-D-glucosamine 1-phosphate + acetyl-CoA = N-acetyl-alpha-D-glucosamine 1-phosphate + CoA + H(+). It catalyses the reaction N-acetyl-alpha-D-glucosamine 1-phosphate + UTP + H(+) = UDP-N-acetyl-alpha-D-glucosamine + diphosphate. The protein operates within nucleotide-sugar biosynthesis; UDP-N-acetyl-alpha-D-glucosamine biosynthesis; N-acetyl-alpha-D-glucosamine 1-phosphate from alpha-D-glucosamine 6-phosphate (route II): step 2/2. Its pathway is nucleotide-sugar biosynthesis; UDP-N-acetyl-alpha-D-glucosamine biosynthesis; UDP-N-acetyl-alpha-D-glucosamine from N-acetyl-alpha-D-glucosamine 1-phosphate: step 1/1. It functions in the pathway bacterial outer membrane biogenesis; LPS lipid A biosynthesis. Functionally, catalyzes the last two sequential reactions in the de novo biosynthetic pathway for UDP-N-acetylglucosamine (UDP-GlcNAc). The C-terminal domain catalyzes the transfer of acetyl group from acetyl coenzyme A to glucosamine-1-phosphate (GlcN-1-P) to produce N-acetylglucosamine-1-phosphate (GlcNAc-1-P), which is converted into UDP-GlcNAc by the transfer of uridine 5-monophosphate (from uridine 5-triphosphate), a reaction catalyzed by the N-terminal domain. The protein is Bifunctional protein GlmU of Anaplasma marginale (strain Florida).